The primary structure comprises 105 residues: POU domain, class 3, transcription factor 3 (105 aa).

A POU-specific domain is found at 1 to 49 (QADVGLALGTLYGNVFSQTTICRFEALQLSFKNMCKLKPLLNKWLEEAD). The segment at residues 67-105 (KRKKRTSIEVSVKGALESHFLKCPKPAAQEITTLADSLQ) is a DNA-binding region (homeobox).

The protein belongs to the POU transcription factor family. Class-3 subfamily.

It is found in the nucleus. This chain is POU domain, class 3, transcription factor 3 (pou3f3), found in Xenopus laevis (African clawed frog).